The following is a 344-amino-acid chain: Sulfate/thiosulfate import ATP-binding protein CysA (344 aa).

Positions 3 to 233 (ILIDNVSKNF…PESAFVMSFL (231 aa)) constitute an ABC transporter domain. 35–42 (GPSGCGKS) contacts ATP.

This sequence belongs to the ABC transporter superfamily. Sulfate/tungstate importer (TC 3.A.1.6) family. As to quaternary structure, the complex is composed of two ATP-binding proteins (CysA), two transmembrane proteins (CysT and CysW) and a solute-binding protein (CysP).

Its subcellular location is the cell inner membrane. It catalyses the reaction sulfate(out) + ATP + H2O = sulfate(in) + ADP + phosphate + H(+). The catalysed reaction is thiosulfate(out) + ATP + H2O = thiosulfate(in) + ADP + phosphate + H(+). Its function is as follows. Part of the ABC transporter complex CysAWTP involved in sulfate/thiosulfate import. Responsible for energy coupling to the transport system. The sequence is that of Sulfate/thiosulfate import ATP-binding protein CysA from Gloeobacter violaceus (strain ATCC 29082 / PCC 7421).